A 477-amino-acid polypeptide reads, in one-letter code: Monocarboxylate transporter 12-B (477 aa).

The Cytoplasmic portion of the chain corresponds to M1 to G9. A run of 12 helical transmembrane segments spans residues V10–V30, A58–I78, I86–T106, G116–I136, I148–I168, L178–I198, F253–Y273, A289–L309, N320–L340, V344–I364, V383–V403, and F413–I433. Residues R434 to S477 lie on the Cytoplasmic side of the membrane.

It belongs to the major facilitator superfamily. Monocarboxylate porter (TC 2.A.1.13) family.

It localises to the cell membrane. The protein resides in the basolateral cell membrane. It carries out the reaction creatine(in) = creatine(out). The catalysed reaction is guanidinoacetate(in) = guanidinoacetate(out). Its function is as follows. Functions as a transporter for creatine and as well for its precursor guanidinoacetate. Transport of creatine and GAA is independent of resting membrane potential and extracellular Na(+), Cl(-), or pH. Contributes to the process of creatine biosynthesis and distribution. The chain is Monocarboxylate transporter 12-B (slc16a12b) from Danio rerio (Zebrafish).